The following is a 560-amino-acid chain: SWI/SNF complex subunit SWI3A homolog (560 aa).

Low complexity predominate over residues Met1–Asp13. Residues Met1 to Glu22 are disordered. An SWIRM domain is found at Tyr24 to Ala127. In terms of domain architecture, SANT spans His242–His293. Over residues Thr311–Glu330 the composition is skewed to polar residues. Disordered stretches follow at residues Thr311–Pro352 and Gln414–Lys445. Positions Thr331–Asp342 are enriched in acidic residues. Composition is skewed to basic and acidic residues over residues Gly343–Pro352 and Arg424–Lys445.

In terms of assembly, interacts with LFR.

It localises to the nucleus. Component of a multiprotein complex equivalent of the SWI/SNF complex, an ATP-dependent chromatin-remodeling complex, which is required for the positive and negative regulation of gene expression of a large number of genes. It changes chromatin structure by altering DNA-histone contacts within a nucleosome, leading eventually to a change in nucleosome position, thus facilitating or repressing binding of gene-specific transcription factors. This chain is SWI/SNF complex subunit SWI3A homolog, found in Oryza sativa subsp. japonica (Rice).